Here is a 98-residue protein sequence, read N- to C-terminus: MTAKPEHYDVIRKPVITEKATMTSEANGVVFAVAMEATKPQIKEAVEAIFNVKVKAVNTVVTKGKTKKFKGRPGVRSDRKKAYVTLEEGNTIDVSTGL.

It belongs to the universal ribosomal protein uL23 family. In terms of assembly, part of the 50S ribosomal subunit. Contacts protein L29, and trigger factor when it is bound to the ribosome.

Functionally, one of the early assembly proteins it binds 23S rRNA. One of the proteins that surrounds the polypeptide exit tunnel on the outside of the ribosome. Forms the main docking site for trigger factor binding to the ribosome. The sequence is that of Large ribosomal subunit protein uL23 from Cereibacter sphaeroides (strain ATCC 17029 / ATH 2.4.9) (Rhodobacter sphaeroides).